Here is a 224-residue protein sequence, read N- to C-terminus: Small ribosomal subunit protein uS3 (224 aa).

The KH type-2 domain occupies 39-107 (IREFLKKKPS…DVWVEIAEVK (69 aa)).

Belongs to the universal ribosomal protein uS3 family. In terms of assembly, part of the 30S ribosomal subunit. Forms a tight complex with proteins S10 and S14.

Its function is as follows. Binds the lower part of the 30S subunit head. Binds mRNA in the 70S ribosome, positioning it for translation. This Chlamydia trachomatis serovar L2 (strain ATCC VR-902B / DSM 19102 / 434/Bu) protein is Small ribosomal subunit protein uS3.